The chain runs to 79 residues: Acyl carrier protein 1 (79 aa).

The Carrier domain maps to 2 to 77 (DNIEQRVKKI…QAIDYARANV (76 aa)). Residue Ser37 is modified to O-(pantetheine 4'-phosphoryl)serine.

Belongs to the acyl carrier protein (ACP) family. Post-translationally, 4'-phosphopantetheine is transferred from CoA to a specific serine of apo-ACP by AcpS. This modification is essential for activity because fatty acids are bound in thioester linkage to the sulfhydryl of the prosthetic group.

The protein resides in the cytoplasm. It participates in lipid metabolism; fatty acid biosynthesis. Its function is as follows. Carrier of the growing fatty acid chain in fatty acid biosynthesis. The sequence is that of Acyl carrier protein 1 from Ralstonia nicotianae (strain ATCC BAA-1114 / GMI1000) (Ralstonia solanacearum).